A 163-amino-acid chain; its full sequence is Putative 4-hydroxy-4-methyl-2-oxoglutarate aldolase (163 aa).

Substrate-binding positions include 76–79 (GDML) and Arg98. Asp99 contacts a divalent metal cation.

It belongs to the class II aldolase/RraA-like family. As to quaternary structure, homotrimer. A divalent metal cation is required as a cofactor.

It carries out the reaction 4-hydroxy-4-methyl-2-oxoglutarate = 2 pyruvate. It catalyses the reaction oxaloacetate + H(+) = pyruvate + CO2. In terms of biological role, catalyzes the aldol cleavage of 4-hydroxy-4-methyl-2-oxoglutarate (HMG) into 2 molecules of pyruvate. Also contains a secondary oxaloacetate (OAA) decarboxylase activity due to the common pyruvate enolate transition state formed following C-C bond cleavage in the retro-aldol and decarboxylation reactions. In Pseudomonas fluorescens (strain ATCC BAA-477 / NRRL B-23932 / Pf-5), this protein is Putative 4-hydroxy-4-methyl-2-oxoglutarate aldolase.